Consider the following 203-residue polypeptide: MQPVRFGSPWIMAIGLVLLLLAFVSAGKSRQRSPANCPTIKLKRQWGGKPSLGLHYQVRPIRYVVIHHTVTGECSGLLKCAEILQNMQAYHQNELDFNDISYNFLIGNDGIVYEGTGWGLRGAHTYGYNAIGTGIAFIGNFVDKLPSDAALQAAKDLLACGVQQGELSEDYALIAGSQVISTQSPGLTLYNEIQEWPHWLSNP.

The first 26 residues, 1–26 (MQPVRFGSPWIMAIGLVLLLLAFVSA), serve as a signal peptide directing secretion. Intrachain disulfides connect Cys-37/Cys-160 and Cys-74/Cys-80. One can recognise an N-acetylmuramoyl-L-alanine amidase domain in the interval 59-186 (RPIRYVVIHH…SQVISTQSPG (128 aa)). 2 peptidoglycan binding regions span residues 87 to 90 (MQAY) and 97 to 102 (FNDISY).

It belongs to the N-acetylmuramoyl-L-alanine amidase 2 family. In terms of tissue distribution, in larvae, it is expressed in fat body. Also expressed in uninduced hemocytes and mbn-2 cells.

Its subcellular location is the secreted. It catalyses the reaction N-acetyl-D-glucosaminyl-N-acetylmuramoyl-L-alanyl-meso-2,6-diaminoheptanedioyl-D-alanine + H2O = N-acetyl-D-glucosaminyl-N-acetylmuramoyl-L-alanyl-meso-2,6-diaminoheptanedioate + D-alanine. Peptidoglycan-recognition protein that plays a key role in innate immunity by binding to peptidoglycans (PGN) of Gram-positive bacteria and activating the Toll pathway upstream of spz activating enzyme SPE. Has no activity against Gram-negative bacteria and fungi. Shows some partial redundancy with PRPGP-SD in Gram-positive bacteria recognition. May act by forming a complex with GNBP1 that activates the proteolytic cleavage of Spatzle and the subsequent activation of Toll pathway. Binds to diaminopimelic acid-type tetrapeptide PGN (DAP-type PGN) and lysine-type PGN (Lys-type PGN). Has some L,D-carboxypeptidase activity for DAP-type PGN, which are specific to prokaryotes, but not for Lys-type PGN. The chain is Peptidoglycan-recognition protein SA (PGRP-SA) from Drosophila melanogaster (Fruit fly).